The chain runs to 127 residues: Glycine cleavage system H protein (127 aa).

The 82-residue stretch at 24–105 (TALVGITDFA…YNEGWIVKMK (82 aa)) folds into the Lipoyl-binding domain. Position 65 is an N6-lipoyllysine (Lys65).

Belongs to the GcvH family. In terms of assembly, the glycine cleavage system is composed of four proteins: P, T, L and H. (R)-lipoate serves as cofactor.

In terms of biological role, the glycine cleavage system catalyzes the degradation of glycine. The H protein shuttles the methylamine group of glycine from the P protein to the T protein. This is Glycine cleavage system H protein from Chlorobaculum tepidum (strain ATCC 49652 / DSM 12025 / NBRC 103806 / TLS) (Chlorobium tepidum).